A 197-amino-acid chain; its full sequence is Pyridoxal 5'-phosphate synthase subunit PdxT (197 aa).

Position 53–55 (53–55) interacts with L-glutamine; the sequence is GES. The active-site Nucleophile is the cysteine 85. L-glutamine is bound by residues arginine 114 and 142–143; that span reads IR. Residues histidine 179 and glutamate 181 each act as charge relay system in the active site.

The protein belongs to the glutaminase PdxT/SNO family. In the presence of PdxS, forms a dodecamer of heterodimers. Only shows activity in the heterodimer.

The catalysed reaction is aldehydo-D-ribose 5-phosphate + D-glyceraldehyde 3-phosphate + L-glutamine = pyridoxal 5'-phosphate + L-glutamate + phosphate + 3 H2O + H(+). It carries out the reaction L-glutamine + H2O = L-glutamate + NH4(+). The protein operates within cofactor biosynthesis; pyridoxal 5'-phosphate biosynthesis. Catalyzes the hydrolysis of glutamine to glutamate and ammonia as part of the biosynthesis of pyridoxal 5'-phosphate. The resulting ammonia molecule is channeled to the active site of PdxS. In Thermococcus onnurineus (strain NA1), this protein is Pyridoxal 5'-phosphate synthase subunit PdxT.